Reading from the N-terminus, the 83-residue chain is Homeobox protein DLX-2 (83 aa).

Polar residues predominate over residues 1 to 14 (STATDSSYYTNQQH). 2 disordered regions span residues 1 to 27 (STAT…SPYA) and 63 to 83 (PYGT…LEPE).

The protein belongs to the distal-less homeobox family. Interacts (via homeobox DNA-binding domain) with POU4F2; this interaction enhances retinal ganglion cell (RGC) differentiation.

It is found in the nucleus. Its function is as follows. Acts as a transcriptional activator. Activates transcription of CGA/alpha-GSU, via binding to the downstream activin regulatory element (DARE) in the gene promoter. Plays a role in terminal differentiation of interneurons, such as amacrine and bipolar cells in the developing retina. Likely to play a regulatory role in the development of the ventral forebrain. May play a role in craniofacial patterning and morphogenesis. The protein is Homeobox protein DLX-2 (Dlx2) of Rattus norvegicus (Rat).